Here is a 463-residue protein sequence, read N- to C-terminus: L-seryl-tRNA(Sec) selenium transferase (463 aa).

The residue at position 295 (Lys295) is an N6-(pyridoxal phosphate)lysine.

Belongs to the SelA family. Homodecamer; pentamer of dimers. Binds only one seryl-tRNA(Sec) per dimer. Pyridoxal 5'-phosphate serves as cofactor.

Its subcellular location is the cytoplasm. The enzyme catalyses L-seryl-tRNA(Sec) + selenophosphate + H(+) = L-selenocysteinyl-tRNA(Sec) + phosphate. It participates in aminoacyl-tRNA biosynthesis; selenocysteinyl-tRNA(Sec) biosynthesis; selenocysteinyl-tRNA(Sec) from L-seryl-tRNA(Sec) (bacterial route): step 1/1. Converts seryl-tRNA(Sec) to selenocysteinyl-tRNA(Sec) required for selenoprotein biosynthesis. This is L-seryl-tRNA(Sec) selenium transferase from Salmonella enteritidis PT4 (strain P125109).